We begin with the raw amino-acid sequence, 1272 residues long: Ubiquitin carboxyl-terminal hydrolase 2 (1272 aa).

One can recognise a USP domain in the interval 736–1258; it reads TGINNIGNTC…TPYFLVYVKQ (523 aa). Cysteine 745 serves as the catalytic Nucleophile. The interval 884–918 is disordered; sequence DGLNGDVGTDANRKKNESNDAEVSENEDTTGLTSP. Residues 902–911 are compositionally biased toward acidic residues; sequence NDAEVSENED. A Phosphoserine modification is found at serine 907. The active-site Proton acceptor is histidine 1209.

It belongs to the peptidase C19 family. As to quaternary structure, forms a ternary complex with RSP5 and RUP1. Interacts with RSP5. Interacts with FZO1.

It catalyses the reaction Thiol-dependent hydrolysis of ester, thioester, amide, peptide and isopeptide bonds formed by the C-terminal Gly of ubiquitin (a 76-residue protein attached to proteins as an intracellular targeting signal).. Functionally, has an ATP-independent isopeptidase activity, cleaving at the C-terminus of the ubiquitin moiety in natural or engineered linear fusion proteins, irrespective of their size or the presence of an N-terminal extension to ubiquitin. Hydrolyzes polyubiquitinated 'Lys-63' polyubiquitin chains in RPO21, producing mono-ubiquitinated RNA polymerase II. Removes ubiquitin chains that initiate proteolysis of FZO1 and inhibit mitochondrial fusion. In Saccharomyces cerevisiae (strain ATCC 204508 / S288c) (Baker's yeast), this protein is Ubiquitin carboxyl-terminal hydrolase 2 (UBP2).